Reading from the N-terminus, the 275-residue chain is MNYNNPTQLQAAILDWAGTVVDFGSFAPTQIFVEAFAEFDVQVSIEEARGPMGMGKWDHIRTLCDVPEIAERYRKVFGRTPTDDDVTAIYNRFMPLQIEKIAVHSALIPGALDTLTGLRQDGLKIGSCSGYPKVVMDKVVELAAQNGYVADHVVATDETPNGRPWPAQALANVIALGIDDVAACVKVDDTVPGILEGRRAGMWTVALVCSGNALGLTWEGFRALSAEKLESERQRIHALFAGSRPHYLIDTINDLPEVIADINRRLAKGEMPQAF.

The Nucleophile role is filled by D15. D15 and A17 together coordinate Mg(2+). The active-site Schiff-base intermediate with substrate is K56. D189 is a Mg(2+) binding site.

The protein belongs to the HAD-like hydrolase superfamily. PhnX family. Homodimer. It depends on Mg(2+) as a cofactor.

It carries out the reaction phosphonoacetaldehyde + H2O = acetaldehyde + phosphate + H(+). In terms of biological role, involved in phosphonate degradation. The sequence is that of Phosphonoacetaldehyde hydrolase from Pseudomonas putida (strain ATCC 700007 / DSM 6899 / JCM 31910 / BCRC 17059 / LMG 24140 / F1).